A 399-amino-acid chain; its full sequence is Tryptophan synthase beta chain (399 aa).

K92 bears the N6-(pyridoxal phosphate)lysine mark.

This sequence belongs to the TrpB family. As to quaternary structure, tetramer of two alpha and two beta chains. The cofactor is pyridoxal 5'-phosphate.

The enzyme catalyses (1S,2R)-1-C-(indol-3-yl)glycerol 3-phosphate + L-serine = D-glyceraldehyde 3-phosphate + L-tryptophan + H2O. Its pathway is amino-acid biosynthesis; L-tryptophan biosynthesis; L-tryptophan from chorismate: step 5/5. In terms of biological role, the beta subunit is responsible for the synthesis of L-tryptophan from indole and L-serine. In Acidithiobacillus ferrooxidans (strain ATCC 23270 / DSM 14882 / CIP 104768 / NCIMB 8455) (Ferrobacillus ferrooxidans (strain ATCC 23270)), this protein is Tryptophan synthase beta chain.